A 181-amino-acid chain; its full sequence is Photosystem I assembly protein Ycf4 (181 aa).

The next 2 membrane-spanning stretches (helical) occupy residues 19–41 and 61–83; these read YFWA…SSYF and LVMS…TLFW.

This sequence belongs to the Ycf4 family.

The protein resides in the plastid. Its subcellular location is the chloroplast thylakoid membrane. Seems to be required for the assembly of the photosystem I complex. The polypeptide is Photosystem I assembly protein Ycf4 (Trieres chinensis (Marine centric diatom)).